The primary structure comprises 101 residues: Small ribosomal subunit protein uS14 (101 aa).

A disordered region spans residues 48–69 (LSKLPRDSSPSRHRSRCELSGR). The span at 51 to 68 (LPRDSSPSRHRSRCELSG) shows a compositional bias: basic and acidic residues.

It belongs to the universal ribosomal protein uS14 family. As to quaternary structure, part of the 30S ribosomal subunit. Contacts proteins S3 and S10.

Functionally, binds 16S rRNA, required for the assembly of 30S particles and may also be responsible for determining the conformation of the 16S rRNA at the A site. This Stenotrophomonas maltophilia (strain R551-3) protein is Small ribosomal subunit protein uS14.